Here is a 302-residue protein sequence, read N- to C-terminus: GTP cyclohydrolase FolE2 (302 aa).

Positions 1-27 are disordered; that stretch reads MPKKQLPPKEERHKLFGSVPPKERTKP.

This sequence belongs to the GTP cyclohydrolase IV family.

It catalyses the reaction GTP + H2O = 7,8-dihydroneopterin 3'-triphosphate + formate + H(+). Its pathway is cofactor biosynthesis; 7,8-dihydroneopterin triphosphate biosynthesis; 7,8-dihydroneopterin triphosphate from GTP: step 1/1. Functionally, converts GTP to 7,8-dihydroneopterin triphosphate. This Oceanobacillus iheyensis (strain DSM 14371 / CIP 107618 / JCM 11309 / KCTC 3954 / HTE831) protein is GTP cyclohydrolase FolE2.